The sequence spans 341 residues: Methionine import ATP-binding protein MetN (341 aa).

Residues I2 to Y237 enclose the ABC transporter domain. G34 to S41 provides a ligand contact to ATP.

Belongs to the ABC transporter superfamily. Methionine importer (TC 3.A.1.24) family. The complex is composed of two ATP-binding proteins (MetN), two transmembrane proteins (MetI) and a solute-binding protein (MetQ).

It is found in the cell inner membrane. It catalyses the reaction L-methionine(out) + ATP + H2O = L-methionine(in) + ADP + phosphate + H(+). The enzyme catalyses D-methionine(out) + ATP + H2O = D-methionine(in) + ADP + phosphate + H(+). Functionally, part of the ABC transporter complex MetNIQ involved in methionine import. Responsible for energy coupling to the transport system. The sequence is that of Methionine import ATP-binding protein MetN from Legionella pneumophila (strain Paris).